The sequence spans 482 residues: MSIPLILASKSKPRRDVLYSAGICPTIRVSHVDEPAALEAAAREEGVTVDDLSIKQRVMILAVAKAEAVHRAYRDVADTAAAATGDRVIAYPLKAKEIKDSEREAAVEDLREAAAGKPIDYSKAEIATTRDFSGIDMPTVTEPIATAIAGQPGLTEATVGPLILGCDSMFLLGGECYGKPHSEAVASERLKRMSGATGELWTGHCLIDFATGRTVRGASHAKVHFGEFTDADVERYIATGEPLEVAGSFTLEGFGGAFIDSIEGDPHGIIGLSLPLARHLAGELGITWTDLWNVGRGELEPESKASGNQHAGILPPVENVHQPGDGWVDCACGRKHWGTNGASGILLARRDPVSGKVTHVVMQHRAAWSAEGGTWGIPGGATADGESPIEGALRESYEEANITPEDIEVVGSYREDHGPWAYTTVFAFEKPGHTVEPKANDDESMEICWVPIDDVPNRKLLTAMKTDWPRFAARLDELATAQ.

The tract at residues 1-299 (MSIPLILASK…DLWNVGRGEL (299 aa)) is maf-like. Asp167 (proton acceptor) is an active-site residue. The 138-residue stretch at 338-475 (GTNGASGILL…TDWPRFAARL (138 aa)) folds into the Nudix hydrolase domain.

This sequence in the N-terminal section; belongs to the Maf family. A divalent metal cation is required as a cofactor.

It localises to the cytoplasm. It catalyses the reaction a ribonucleoside 5'-triphosphate + H2O = a ribonucleoside 5'-phosphate + diphosphate + H(+). It carries out the reaction a 2'-deoxyribonucleoside 5'-triphosphate + H2O = a 2'-deoxyribonucleoside 5'-phosphate + diphosphate + H(+). Functionally, nucleoside triphosphate pyrophosphatase. May have a dual role in cell division arrest and in preventing the incorporation of modified nucleotides into cellular nucleic acids. This Bifidobacterium longum (strain NCC 2705) protein is Nucleoside triphosphate pyrophosphatase/Nudix hydrolase fusion protein.